The chain runs to 136 residues: Probable endoribonuclease MazF7 (136 aa).

Residues 115 to 136 (TGPERGEAATHSPVRWTGGRDP) form a disordered region.

The protein belongs to the PemK/MazF family. In terms of assembly, forms a complex with cognate antitoxin MazE7.

Its function is as follows. Toxic component of a type II toxin-antitoxin (TA) system. Upon expression in E.coli and M.smegmatis inhibits cell growth and colony formation. Its toxic effect is neutralized by coexpression with cognate antitoxin MazE7. Probably an endoribonuclease. This is Probable endoribonuclease MazF7 (mazF7) from Mycobacterium tuberculosis (strain ATCC 25618 / H37Rv).